The following is a 792-amino-acid chain: DNA ligase (792 aa).

Residues 42-46 (DAEYD), 91-92 (SL), and Glu124 contribute to the NAD(+) site. The N6-AMP-lysine intermediate role is filled by Lys126. The NAD(+) site is built by Arg147, Glu189, Lys306, and Lys330. The Zn(2+) site is built by Cys424, Cys426, Cys448, and Cys454. The BRCT domain occupies 714–792 (KTDTAVAGKT…EDEWLAMVGG (79 aa)).

It belongs to the NAD-dependent DNA ligase family. LigA subfamily. Mg(2+) is required as a cofactor. Requires Mn(2+) as cofactor.

It carries out the reaction NAD(+) + (deoxyribonucleotide)n-3'-hydroxyl + 5'-phospho-(deoxyribonucleotide)m = (deoxyribonucleotide)n+m + AMP + beta-nicotinamide D-nucleotide.. DNA ligase that catalyzes the formation of phosphodiester linkages between 5'-phosphoryl and 3'-hydroxyl groups in double-stranded DNA using NAD as a coenzyme and as the energy source for the reaction. It is essential for DNA replication and repair of damaged DNA. This is DNA ligase from Caulobacter sp. (strain K31).